Here is a 124-residue protein sequence, read N- to C-terminus: Putative membrane protein insertion efficiency factor (124 aa).

It belongs to the UPF0161 family.

The protein resides in the cell inner membrane. Its function is as follows. Could be involved in insertion of integral membrane proteins into the membrane. This Psychrobacter arcticus (strain DSM 17307 / VKM B-2377 / 273-4) protein is Putative membrane protein insertion efficiency factor.